A 302-amino-acid polypeptide reads, in one-letter code: Sulfate adenylyltransferase subunit 2 (302 aa).

The segment at 280 to 302 (RQGRVIDHDSSGSMEKKKREGYF) is disordered.

This sequence belongs to the PAPS reductase family. CysD subfamily. In terms of assembly, heterodimer composed of CysD, the smaller subunit, and CysN.

The catalysed reaction is sulfate + ATP + H(+) = adenosine 5'-phosphosulfate + diphosphate. It functions in the pathway sulfur metabolism; hydrogen sulfide biosynthesis; sulfite from sulfate: step 1/3. In terms of biological role, with CysN forms the ATP sulfurylase (ATPS) that catalyzes the adenylation of sulfate producing adenosine 5'-phosphosulfate (APS) and diphosphate, the first enzymatic step in sulfur assimilation pathway. APS synthesis involves the formation of a high-energy phosphoric-sulfuric acid anhydride bond driven by GTP hydrolysis by CysN coupled to ATP hydrolysis by CysD. This chain is Sulfate adenylyltransferase subunit 2, found in Shewanella amazonensis (strain ATCC BAA-1098 / SB2B).